Here is a 508-residue protein sequence, read N- to C-terminus: Aldehyde dehydrogenase (508 aa).

Active-site residues include Glu-264 and Cys-303.

It belongs to the aldehyde dehydrogenase family.

The enzyme catalyses acetaldehyde + NAD(+) + H2O = acetate + NADH + 2 H(+). Its pathway is organosulfur degradation. In terms of biological role, catalyzes the NAD(+)-dependent oxidation of acetaldehyde to acetate. The sequence is that of Aldehyde dehydrogenase from Paracoccus denitrificans (strain Pd 1222).